A 107-amino-acid polypeptide reads, in one-letter code: Cysteine proteinase inhibitor (107 aa).

Residues 18–107 (GGVQDAPAGR…KQLQEFKPAA (90 aa)) enclose the Cystatin domain. A Secondary area of contact motif is present at residues 63–67 (QVVAG).

This sequence belongs to the cystatin family. Phytocystatin subfamily. Expressed in embryos, developing endosperms, leaves, roots, flowers and pollen grains.

Its function is as follows. Inhibits papain, ficin, cathepsin B and, to a lesser extent, chymopapain, but is inactive against bromelain. Inhibits the growth of pathogenic fungi. Regulated by the DOF transcription factors SAD (activator) and BPBF (repressor). The chain is Cysteine proteinase inhibitor (ICY) from Hordeum vulgare (Barley).